We begin with the raw amino-acid sequence, 243 residues long: MKHFIILFLLLFVTAGCEGRGYEDVVAFGDSNTRGSNWDYRDYPKAQQWVNILKTAERGNLDILNAGIGGQTTEDARLRFQTDVLDQKPKYLFIMFGTNDAAILTEGKPRVSKQRFRENLVYFIEESRKHGIKPILMTCIPIIEGNGKHHLFYYSRYQAAAFEPKGGARKWHNSYNDITRDVSKRLDVPLVDNWKHFIEADGGKATDEALIQSGLIDPSGNHMTPKGARIVYEGIQDGQILQR.

The signal sequence occupies residues 1 to 16 (MKHFIILFLLLFVTAG). The N-palmitoyl cysteine moiety is linked to residue Cys17. A lipid anchor (S-diacylglycerol cysteine) is attached at Cys17.

It is found in the cell membrane. This is an uncharacterized protein from Bacillus subtilis (strain 168).